Reading from the N-terminus, the 247-residue chain is Carboxy-S-adenosyl-L-methionine synthase (247 aa).

S-adenosyl-L-methionine is bound by residues Tyr-40, 65–67 (GAS), 90–91 (DN), 122–123 (DI), Asn-137, and Arg-204.

The protein belongs to the class I-like SAM-binding methyltransferase superfamily. Cx-SAM synthase family. As to quaternary structure, homodimer.

The enzyme catalyses prephenate + S-adenosyl-L-methionine = carboxy-S-adenosyl-L-methionine + 3-phenylpyruvate + H2O. Functionally, catalyzes the conversion of S-adenosyl-L-methionine (SAM) to carboxy-S-adenosyl-L-methionine (Cx-SAM). This chain is Carboxy-S-adenosyl-L-methionine synthase, found in Pseudomonas putida (strain W619).